A 475-amino-acid polypeptide reads, in one-letter code: Ribulose bisphosphate carboxylase large chain (475 aa).

Positions 1–2 (MS) are excised as a propeptide. P3 carries the post-translational modification N-acetylproline. At K14 the chain carries N6,N6,N6-trimethyllysine. The substrate site is built by N123 and T173. K175 acts as the Proton acceptor in catalysis. K177 contacts substrate. 3 residues coordinate Mg(2+): K201, D203, and E204. K201 carries the N6-carboxylysine modification. H294 acts as the Proton acceptor in catalysis. Substrate is bound by residues R295, H327, and S379.

It belongs to the RuBisCO large chain family. Type I subfamily. In terms of assembly, heterohexadecamer of 8 large chains and 8 small chains; disulfide-linked. The disulfide link is formed within the large subunit homodimers. Mg(2+) serves as cofactor. The disulfide bond which can form in the large chain dimeric partners within the hexadecamer appears to be associated with oxidative stress and protein turnover.

It is found in the plastid. It localises to the chloroplast. The enzyme catalyses 2 (2R)-3-phosphoglycerate + 2 H(+) = D-ribulose 1,5-bisphosphate + CO2 + H2O. It carries out the reaction D-ribulose 1,5-bisphosphate + O2 = 2-phosphoglycolate + (2R)-3-phosphoglycerate + 2 H(+). Functionally, ruBisCO catalyzes two reactions: the carboxylation of D-ribulose 1,5-bisphosphate, the primary event in carbon dioxide fixation, as well as the oxidative fragmentation of the pentose substrate in the photorespiration process. Both reactions occur simultaneously and in competition at the same active site. This Gossypium hirsutum (Upland cotton) protein is Ribulose bisphosphate carboxylase large chain.